We begin with the raw amino-acid sequence, 29 residues long: Cytochrome b6-f complex subunit 8 (29 aa).

Residues 3-23 (IVSFAWAALMVVFTFSLSLVV) traverse the membrane as a helical segment.

It belongs to the PetN family. In terms of assembly, the 4 large subunits of the cytochrome b6-f complex are cytochrome b6, subunit IV (17 kDa polypeptide, PetD), cytochrome f and the Rieske protein, while the 4 small subunits are PetG, PetL, PetM and PetN. The complex functions as a dimer.

It localises to the plastid. It is found in the chloroplast thylakoid membrane. Its function is as follows. Component of the cytochrome b6-f complex, which mediates electron transfer between photosystem II (PSII) and photosystem I (PSI), cyclic electron flow around PSI, and state transitions. The protein is Cytochrome b6-f complex subunit 8 of Phalaenopsis aphrodite subsp. formosana (Moth orchid).